The primary structure comprises 309 residues: tRNA dimethylallyltransferase (309 aa).

ATP is bound at residue Gly-10–Thr-17. Thr-12 to Thr-17 lines the substrate pocket. The tract at residues Asp-35–Gln-38 is interaction with substrate tRNA.

Belongs to the IPP transferase family. In terms of assembly, monomer. It depends on Mg(2+) as a cofactor.

It carries out the reaction adenosine(37) in tRNA + dimethylallyl diphosphate = N(6)-dimethylallyladenosine(37) in tRNA + diphosphate. Its function is as follows. Catalyzes the transfer of a dimethylallyl group onto the adenine at position 37 in tRNAs that read codons beginning with uridine, leading to the formation of N6-(dimethylallyl)adenosine (i(6)A). This chain is tRNA dimethylallyltransferase, found in Clostridium beijerinckii (strain ATCC 51743 / NCIMB 8052) (Clostridium acetobutylicum).